Here is a 445-residue protein sequence, read N- to C-terminus: C-terminal-binding protein 2 (445 aa).

Arg-22 is modified (asymmetric dimethylarginine). NAD(+)-binding positions include Ser-106, 186–191 (IGFGRT), Asp-210, 243–249 (CNLNEHN), 270–272 (AAR), and Asp-296. Arg-272 is a catalytic residue. The active site involves Glu-301. Residue His-321 is the Proton donor of the active site. Residue 321–324 (HTAW) coordinates NAD(+). The interval 414-445 (THNLPTVAHPSQAPSPNQPTKHGDNREHPNEQ) is disordered. At Ser-428 the chain carries Phosphoserine; by HIPK2. Residues 434–445 (KHGDNREHPNEQ) are compositionally biased toward basic and acidic residues.

It belongs to the D-isomer specific 2-hydroxyacid dehydrogenase family. Interacts with HIPK2 and PNN. Interacts with the transcription factors ZNF217, BKLF, delta EF1/AREB6/ZEB, EVI-1 and Friend of GATA (FOG) via the consensus motif P-X-[DNS]-L-[STVA]. Also interacts with the C-terminus of adenovirus E1A protein. Can form a complex with BKLF on a CACCC-box oligonucleotide. Can form homodimers or heterodimers of CTBP1 and CTBP2. Interacts with NRIP1 and WIZ. Interacts with PRDM16; represses white adipose tissue (WAT)-specific genes expression. Interacts with MCRIP1. Post-translationally, phosphorylation by HIPK2 on Ser-428 induces proteasomal degradation. In terms of tissue distribution, found in all tissues except spleen and liver.

Its subcellular location is the nucleus. The protein resides in the synapse. In terms of biological role, corepressor targeting diverse transcription regulators. Isoform 2 probably acts as a scaffold for specialized synapses. Functions in brown adipose tissue (BAT) differentiation. The chain is C-terminal-binding protein 2 (Ctbp2) from Mus musculus (Mouse).